The chain runs to 235 residues: Carbohydrate deacetylase (235 aa).

Residues His-61 and His-124 each contribute to the Mg(2+) site.

Belongs to the YdjC deacetylase family. Mg(2+) serves as cofactor.

Its function is as follows. Probably catalyzes the deacetylation of acetylated carbohydrates an important step in the degradation of oligosaccharides. This chain is Carbohydrate deacetylase, found in Bacillus cereus (strain B4264).